Consider the following 384-residue polypeptide: Dihydrolipoyllysine-residue acetyltransferase component of pyruvate dehydrogenase complex (384 aa).

The 76-residue stretch at 2 to 77 (ANEFKFTDVG…SIGQVMAVIG (76 aa)) folds into the Lipoyl-binding domain. Position 43 is an N6-lipoyllysine (Lys43). His356 is an active-site residue.

Belongs to the 2-oxoacid dehydrogenase family. As to quaternary structure, forms a 24-polypeptide structural core with octahedral symmetry. Requires (R)-lipoate as cofactor.

It carries out the reaction N(6)-[(R)-dihydrolipoyl]-L-lysyl-[protein] + acetyl-CoA = N(6)-[(R)-S(8)-acetyldihydrolipoyl]-L-lysyl-[protein] + CoA. The pyruvate dehydrogenase complex catalyzes the overall conversion of pyruvate to acetyl-CoA and CO(2). It contains multiple copies of three enzymatic components: pyruvate dehydrogenase (E1), dihydrolipoamide acetyltransferase (E2) and lipoamide dehydrogenase (E3). In Mycoplasma genitalium (strain ATCC 33530 / DSM 19775 / NCTC 10195 / G37) (Mycoplasmoides genitalium), this protein is Dihydrolipoyllysine-residue acetyltransferase component of pyruvate dehydrogenase complex (pdhC).